The sequence spans 182 residues: Sperm acrosome-associated protein 7 (182 aa).

A signal peptide spans 1–24 (MAANRGSRTFLSVFLLCCWQGAEL). Asn40 carries an N-linked (GlcNAc...) asparagine glycan. Residues 112-140 (LPTKEESGKNDRSTVANLHDHSSQTKHEP) show a composition bias toward basic and acidic residues. Positions 112–154 (LPTKEESGKNDRSTVANLHDHSSQTKHEPPSSPEGKGSSNDDV) are disordered.

As to expression, testis-specific. Expressed in zygotene and pachytene spermatocytes, round spermatids, elongating spermatids and spermatozoa (at protein level). Testis-specific.

It is found in the secreted. Its subcellular location is the cytoplasmic vesicle. It localises to the secretory vesicle. The protein resides in the acrosome lumen. Its function is as follows. Involved in fertilization. Seems not to play a direct role in sperm-egg binding or gamete fusion. In Mus musculus (Mouse), this protein is Sperm acrosome-associated protein 7.